Reading from the N-terminus, the 877-residue chain is Phosphoenolpyruvate carboxylase (877 aa).

Catalysis depends on residues His-138 and Lys-544.

The protein belongs to the PEPCase type 1 family. Mg(2+) serves as cofactor.

It catalyses the reaction oxaloacetate + phosphate = phosphoenolpyruvate + hydrogencarbonate. Forms oxaloacetate, a four-carbon dicarboxylic acid source for the tricarboxylic acid cycle. The chain is Phosphoenolpyruvate carboxylase from Vibrio vulnificus (strain CMCP6).